A 324-amino-acid polypeptide reads, in one-letter code: tRNA-modifying protein YgfZ (324 aa).

Residue Trp186 participates in folate binding.

Belongs to the tRNA-modifying YgfZ family.

It is found in the cytoplasm. In terms of biological role, folate-binding protein involved in regulating the level of ATP-DnaA and in the modification of some tRNAs. It is probably a key factor in regulatory networks that act via tRNA modification, such as initiation of chromosomal replication. The sequence is that of tRNA-modifying protein YgfZ from Colwellia psychrerythraea (strain 34H / ATCC BAA-681) (Vibrio psychroerythus).